The chain runs to 275 residues: Ribosomal RNA small subunit methyltransferase A (275 aa).

The S-adenosyl-L-methionine site is built by N21, L23, G48, E69, D94, and N115.

Belongs to the class I-like SAM-binding methyltransferase superfamily. rRNA adenine N(6)-methyltransferase family. RsmA subfamily.

It localises to the cytoplasm. The catalysed reaction is adenosine(1518)/adenosine(1519) in 16S rRNA + 4 S-adenosyl-L-methionine = N(6)-dimethyladenosine(1518)/N(6)-dimethyladenosine(1519) in 16S rRNA + 4 S-adenosyl-L-homocysteine + 4 H(+). Functionally, specifically dimethylates two adjacent adenosines (A1518 and A1519) in the loop of a conserved hairpin near the 3'-end of 16S rRNA in the 30S particle. May play a critical role in biogenesis of 30S subunits. This Clostridium botulinum (strain Loch Maree / Type A3) protein is Ribosomal RNA small subunit methyltransferase A.